Here is a 129-residue protein sequence, read N- to C-terminus: DNA-directed RNA polymerase subunit omega (129 aa).

The interval 76–100 (EVDEPEPEAVPMIASGDSSGGEDSD) is disordered.

Belongs to the RNA polymerase subunit omega family. In terms of assembly, the RNAP catalytic core consists of 2 alpha, 1 beta, 1 beta' and 1 omega subunit. When a sigma factor is associated with the core the holoenzyme is formed, which can initiate transcription.

It carries out the reaction RNA(n) + a ribonucleoside 5'-triphosphate = RNA(n+1) + diphosphate. Promotes RNA polymerase assembly. Latches the N- and C-terminal regions of the beta' subunit thereby facilitating its interaction with the beta and alpha subunits. The chain is DNA-directed RNA polymerase subunit omega from Xanthobacter autotrophicus (strain ATCC BAA-1158 / Py2).